The primary structure comprises 338 residues: Aspartate carbamoyltransferase catalytic subunit (338 aa).

Carbamoyl phosphate contacts are provided by R59 and T60. K87 provides a ligand contact to L-aspartate. 3 residues coordinate carbamoyl phosphate: R109, H142, and Q145. Residues R182 and R253 each contribute to the L-aspartate site. Carbamoyl phosphate-binding residues include G294 and P295.

This sequence belongs to the aspartate/ornithine carbamoyltransferase superfamily. ATCase family. In terms of assembly, heterododecamer (2C3:3R2) of six catalytic PyrB chains organized as two trimers (C3), and six regulatory PyrI chains organized as three dimers (R2).

The enzyme catalyses carbamoyl phosphate + L-aspartate = N-carbamoyl-L-aspartate + phosphate + H(+). It functions in the pathway pyrimidine metabolism; UMP biosynthesis via de novo pathway; (S)-dihydroorotate from bicarbonate: step 2/3. Functionally, catalyzes the condensation of carbamoyl phosphate and aspartate to form carbamoyl aspartate and inorganic phosphate, the committed step in the de novo pyrimidine nucleotide biosynthesis pathway. The protein is Aspartate carbamoyltransferase catalytic subunit of Prochlorococcus marinus (strain SARG / CCMP1375 / SS120).